The sequence spans 304 residues: Lipid droplet-associated triacylglycerol lipase (304 aa).

The Lumenal portion of the chain corresponds to 1 to 155 (MTVKEYTKSK…MGIKMTAALR (155 aa)). N-linked (GlcNAc...) asparagine glycosylation is present at Asn-95. The short motif at 107–111 (GHSVG) is the GXSXG element. Ser-109 acts as the Nucleophile in catalysis. An intramembrane segment occupies 156–176 (YIPPLAHVVSLFSYIFFYWIL). The Lumenal portion of the chain corresponds to 177–304 (SEGFSRFIID…HAEYAINAFF (128 aa)).

It belongs to the AB hydrolase superfamily. LDAH family.

It localises to the lipid droplet. Its subcellular location is the membrane. It catalyses the reaction a triacylglycerol + H2O = a diacylglycerol + a fatty acid + H(+). In terms of biological role, shows both triacylglycerol (TAG) lipase and ester hydrolase activities. May play a role in TAG homeostasis. The chain is Lipid droplet-associated triacylglycerol lipase from Saccharomyces cerevisiae (strain ATCC 204508 / S288c) (Baker's yeast).